Consider the following 399-residue polypeptide: Formate-dependent phosphoribosylglycinamide formyltransferase (399 aa).

Residues 22–23 and glutamate 82 contribute to the N(1)-(5-phospho-beta-D-ribosyl)glycinamide site; that span reads EL. ATP contacts are provided by residues arginine 114, lysine 155, 160–165, 195–198, and glutamate 203; these read SSGKGQ and EKMI. Residues 119-308 enclose the ATP-grasp domain; that stretch reads RLAAETLHLL…EFALHVRAFL (190 aa). Positions 267 and 279 each coordinate Mg(2+). Residues aspartate 286, lysine 355, and 362 to 363 contribute to the N(1)-(5-phospho-beta-D-ribosyl)glycinamide site; that span reads RR.

This sequence belongs to the PurK/PurT family. In terms of assembly, homodimer.

The catalysed reaction is N(1)-(5-phospho-beta-D-ribosyl)glycinamide + formate + ATP = N(2)-formyl-N(1)-(5-phospho-beta-D-ribosyl)glycinamide + ADP + phosphate + H(+). Its pathway is purine metabolism; IMP biosynthesis via de novo pathway; N(2)-formyl-N(1)-(5-phospho-D-ribosyl)glycinamide from N(1)-(5-phospho-D-ribosyl)glycinamide (formate route): step 1/1. Involved in the de novo purine biosynthesis. Catalyzes the transfer of formate to 5-phospho-ribosyl-glycinamide (GAR), producing 5-phospho-ribosyl-N-formylglycinamide (FGAR). Formate is provided by PurU via hydrolysis of 10-formyl-tetrahydrofolate. This is Formate-dependent phosphoribosylglycinamide formyltransferase from Proteus mirabilis (strain HI4320).